The following is a 96-amino-acid chain: Co-chaperonin GroES (96 aa).

The protein belongs to the GroES chaperonin family. Heptamer of 7 subunits arranged in a ring. Interacts with the chaperonin GroEL.

It localises to the cytoplasm. Together with the chaperonin GroEL, plays an essential role in assisting protein folding. The GroEL-GroES system forms a nano-cage that allows encapsulation of the non-native substrate proteins and provides a physical environment optimized to promote and accelerate protein folding. GroES binds to the apical surface of the GroEL ring, thereby capping the opening of the GroEL channel. This is Co-chaperonin GroES from Hahella chejuensis (strain KCTC 2396).